A 1012-amino-acid polypeptide reads, in one-letter code: DNA polymerase catalytic subunit (1012 aa).

It belongs to the DNA polymerase type-B family.

It localises to the host nucleus. The enzyme catalyses DNA(n) + a 2'-deoxyribonucleoside 5'-triphosphate = DNA(n+1) + diphosphate. Its function is as follows. Replicates viral genomic DNA. The chain is DNA polymerase catalytic subunit (U38) from Human herpesvirus 6B (strain Z29) (HHV-6 variant B).